A 585-amino-acid polypeptide reads, in one-letter code: Arginine--tRNA ligase (585 aa).

The 'HIGH' region signature appears at 131-141 (ANPTGPMHVGH).

This sequence belongs to the class-I aminoacyl-tRNA synthetase family. As to quaternary structure, monomer.

Its subcellular location is the cytoplasm. It carries out the reaction tRNA(Arg) + L-arginine + ATP = L-arginyl-tRNA(Arg) + AMP + diphosphate. The sequence is that of Arginine--tRNA ligase from Brucella canis (strain ATCC 23365 / NCTC 10854 / RM-666).